Consider the following 98-residue polypeptide: Elicitin Vex1 (98 aa).

3 cysteine pairs are disulfide-bonded: Cys-3/Cys-71, Cys-27/Cys-56, and Cys-51/Cys-95. Asn-92 is a glycosylation site (N-linked (GlcNAc...) asparagine).

It belongs to the elicitin family.

It is found in the secreted. In terms of biological role, induces local and distal defense responses (incompatible hypersensitive reaction) in plants from the solanaceae and cruciferae families. Elicits leaf necrosis and causes the accumulation of pathogenesis-related proteins. Might interact with the lipidic molecules of the plasma membrane. This chain is Elicitin Vex1, found in Phytopythium vexans (Damping-off fungus).